The chain runs to 709 residues: MQVFSMEIAGRTLTIETGRVAKQAGGSVLARYGDTVVLVTATGSKEPRPGIDFFPLTVDYEERLYAVGKIPGGFIKREGRPTEKAILSARLIDRPIRPLFPKGFRNDVQVVATVMSVDQDCPPDIVGMIGASCALSLSDIPFEGPIGGVLVGRVDGKLLINPTMEQAEKSDMHLVVAGTKDAVMMVEAGANEVPEEDMIEAIMFGHQEIQRIVAFQEEMVAVAGKPKREVPLKQINPELEQAVREYVGDKLRNAIQNPDKLSREADIQAVMKETVEALLPHFPEEEKDIRTVLDTMEKEIVRKLITVDKQRPDGRKMDEIRPISVEVGILPRTHGSGLFTRGQTQVLNVCTLGTIADLQILDGLGVEESKRYMHHYNFPPYSVGETRPMRGPGRREIGHGALAERALLPVIPSEDEFPYTIRLVSEAVESNGSTSMASVCGSTLSLMNAGVPIKKPVAGIAMGLIKEGEHFSILSDIQGMEDHLGDMDFKVAGTADGVTALQMDIKIKGVNREILTQALQQARKGRLFILDKMLAVIDKPAAEMSPYAPRIITMSIDPDKIREVIGPGGKVINKIIAETGVKIDIEDDGRIFIAATDTEAANKAVRIIESITADVEVGKVYTGKVTRIMNFGAFVEVLPGKEGLIHISQLAEERVAKVEDVVKIGDEVTVKVVEIDKQGRINLSRKEVLKANKPAVTGGARPDEMRRRF.

Positions 482 and 488 each coordinate Mg(2+). Residues 549–608 (PRIITMSIDPDKIREVIGPGGKVINKIIAETGVKIDIEDDGRIFIAATDTEAANKAVRII) form the KH domain. The region spanning 618 to 686 (GKVYTGKVTR…KQGRINLSRK (69 aa)) is the S1 motif domain.

The protein belongs to the polyribonucleotide nucleotidyltransferase family. Mg(2+) is required as a cofactor.

The protein resides in the cytoplasm. It catalyses the reaction RNA(n+1) + phosphate = RNA(n) + a ribonucleoside 5'-diphosphate. Its function is as follows. Involved in mRNA degradation. Catalyzes the phosphorolysis of single-stranded polyribonucleotides processively in the 3'- to 5'-direction. The protein is Polyribonucleotide nucleotidyltransferase of Heliobacterium modesticaldum (strain ATCC 51547 / Ice1).